A 211-amino-acid polypeptide reads, in one-letter code: Proteasome subunit beta (211 aa).

Residues Met-1 to Gly-9 constitute a propeptide, removed in mature form; by autocatalysis. Residue Thr-10 is the Nucleophile of the active site.

Belongs to the peptidase T1B family. As to quaternary structure, the 20S proteasome core is composed of 14 alpha and 14 beta subunits that assemble into four stacked heptameric rings, resulting in a barrel-shaped structure. The two inner rings, each composed of seven catalytic beta subunits, are sandwiched by two outer rings, each composed of seven alpha subunits. The catalytic chamber with the active sites is on the inside of the barrel. Has a gated structure, the ends of the cylinder being occluded by the N-termini of the alpha-subunits. Is capped at one or both ends by the proteasome regulatory ATPase, PAN.

It is found in the cytoplasm. It catalyses the reaction Cleavage of peptide bonds with very broad specificity.. Its activity is regulated as follows. The formation of the proteasomal ATPase PAN-20S proteasome complex, via the docking of the C-termini of PAN into the intersubunit pockets in the alpha-rings, triggers opening of the gate for substrate entry. Interconversion between the open-gate and close-gate conformations leads to a dynamic regulation of the 20S proteasome proteolysis activity. Its function is as follows. Component of the proteasome core, a large protease complex with broad specificity involved in protein degradation. In Methanosphaerula palustris (strain ATCC BAA-1556 / DSM 19958 / E1-9c), this protein is Proteasome subunit beta.